Consider the following 415-residue polypeptide: Serine hydroxymethyltransferase (415 aa).

(6S)-5,6,7,8-tetrahydrofolate-binding positions include Leu-118 and 122 to 124 (GHL). Lys-227 carries the N6-(pyridoxal phosphate)lysine modification.

The protein belongs to the SHMT family. In terms of assembly, homodimer. It depends on pyridoxal 5'-phosphate as a cofactor.

It is found in the cytoplasm. The enzyme catalyses (6R)-5,10-methylene-5,6,7,8-tetrahydrofolate + glycine + H2O = (6S)-5,6,7,8-tetrahydrofolate + L-serine. It functions in the pathway one-carbon metabolism; tetrahydrofolate interconversion. It participates in amino-acid biosynthesis; glycine biosynthesis; glycine from L-serine: step 1/1. Its function is as follows. Catalyzes the reversible interconversion of serine and glycine with tetrahydrofolate (THF) serving as the one-carbon carrier. This reaction serves as the major source of one-carbon groups required for the biosynthesis of purines, thymidylate, methionine, and other important biomolecules. Also exhibits THF-independent aldolase activity toward beta-hydroxyamino acids, producing glycine and aldehydes, via a retro-aldol mechanism. This Elusimicrobium minutum (strain Pei191) protein is Serine hydroxymethyltransferase.